The chain runs to 204 residues: MNSVVLQLSVVCLGVSSQQITDSQRLFSIAVNRVTHLYLLAQRLFSDFESSLQTEEQRQLNKIFLQDFCNSDYIISPIDKHETQRSSVLKLLSISYGLVESWEFPSRSLSGGSSLRNQISPRLSELKTGILLLIRANQDEAENYPDTDTLQHAPYGNYYQSLGGNESLRQTYELLACFKKDMHKVETYLTVAKCRLSPEANCTL.

The first 17 residues, 1–17, serve as a signal peptide directing secretion; that stretch reads MNSVVLQLSVVCLGVSS. Glutamine 18 is modified (pyrrolidone carboxylic acid). Position 36 (histidine 36) interacts with Zn(2+). Cysteine 69 and cysteine 177 are joined by a disulfide. Glutamate 186 lines the Zn(2+) pocket. A disulfide bridge links cysteine 194 with cysteine 202.

This sequence belongs to the somatotropin/prolactin family.

The protein localises to the secreted. In terms of biological role, growth hormone plays an important role in growth control and involved in the regulation of several anabolic processes. This Oreochromis mossambicus (Mozambique tilapia) protein is Somatotropin (gh).